Here is a 490-residue protein sequence, read N- to C-terminus: Aspartyl/glutamyl-tRNA(Asn/Gln) amidotransferase subunit B (490 aa).

The protein belongs to the GatB/GatE family. GatB subfamily. Heterotrimer of A, B and C subunits.

The catalysed reaction is L-glutamyl-tRNA(Gln) + L-glutamine + ATP + H2O = L-glutaminyl-tRNA(Gln) + L-glutamate + ADP + phosphate + H(+). It carries out the reaction L-aspartyl-tRNA(Asn) + L-glutamine + ATP + H2O = L-asparaginyl-tRNA(Asn) + L-glutamate + ADP + phosphate + 2 H(+). In terms of biological role, allows the formation of correctly charged Asn-tRNA(Asn) or Gln-tRNA(Gln) through the transamidation of misacylated Asp-tRNA(Asn) or Glu-tRNA(Gln) in organisms which lack either or both of asparaginyl-tRNA or glutaminyl-tRNA synthetases. The reaction takes place in the presence of glutamine and ATP through an activated phospho-Asp-tRNA(Asn) or phospho-Glu-tRNA(Gln). In Methylorubrum extorquens (strain CM4 / NCIMB 13688) (Methylobacterium extorquens), this protein is Aspartyl/glutamyl-tRNA(Asn/Gln) amidotransferase subunit B.